The sequence spans 411 residues: Isocitrate dehydrogenase [NADP] peroxisomal (411 aa).

NADP(+)-binding positions include 78-80 and Arg-85; that span reads TIT. Substrate is bound at residue Thr-80. Substrate-binding positions include 97–103, Arg-112, and Arg-135; that span reads SPNGTLR. Mn(2+) is bound at residue Asp-254. Lys-262 contacts NADP(+). Asp-277 contacts Mn(2+). Residues 312-317 and Asn-330 each bind NADP(+); that span reads GTVTRH.

Belongs to the isocitrate and isopropylmalate dehydrogenases family. The cofactor is Mg(2+). Requires Mn(2+) as cofactor.

It localises to the peroxisome. It catalyses the reaction D-threo-isocitrate + NADP(+) = 2-oxoglutarate + CO2 + NADPH. May play a role in N-alkane metabolism, glutamate synthesis, and/or NADPH generation in the peroxisomes. The sequence is that of Isocitrate dehydrogenase [NADP] peroxisomal (IDP2) from Candida tropicalis (Yeast).